A 171-amino-acid chain; its full sequence is 16S rRNA aminocarboxypropyltransferase (171 aa).

4 residues coordinate S-adenosyl-L-methionine: threonine 18, leucine 68, leucine 91, and serine 110.

Belongs to the TDD superfamily. TSR3 family.

It localises to the cytoplasm. The enzyme catalyses an N(1)-methylpseudouridine in rRNA + S-adenosyl-L-methionine = N(1)-methyl-N(3)-[(3S)-3-amino-3-carboxypropyl]pseudouridine in rRNA + S-methyl-5'-thioadenosine + H(+). Functionally, aminocarboxypropyltransferase that catalyzes the aminocarboxypropyl transfer on pseudouridine corresponding to position 914 in M.jannaschii 16S rRNA. It constitutes the last step in biosynthesis of the hypermodified N1-methyl-N3-(3-amino-3-carboxypropyl) pseudouridine (m1acp3-Psi). This Methanosphaera stadtmanae (strain ATCC 43021 / DSM 3091 / JCM 11832 / MCB-3) protein is 16S rRNA aminocarboxypropyltransferase.